The chain runs to 1186 residues: Probable inactive serine/threonine-protein kinase DDB_G0293184 (1186 aa).

A compositionally biased stretch (acidic residues) spans 1-12; it reads MEQEDQQYEEDS. Disordered stretches follow at residues 1–55 and 99–122; these read MEQE…NNDS and MEQQQQQQHLQPPLSPNSASNTNF. 2 stretches are compositionally biased toward low complexity: residues 34-48 and 99-110; these read TTTEITTTTTTTTPT and MEQQQQQQHLQP. The Protein kinase domain occupies 173–437; it reads YESPPTLGKY…VHDLLRHPWL (265 aa). Residues 179-187 and Lys205 contribute to the ATP site; that span reads LGKYDKVIL. Disordered regions lie at residues 447–468 and 530–551; these read SSSSSSQAHPTVQSNNLNGNVN and YNNYNNNNNNNNNTNDNDNECG. Residues 453-468 show a composition bias toward polar residues; that stretch reads QAHPTVQSNNLNGNVN. Residues 530 to 545 are compositionally biased toward low complexity; that stretch reads YNNYNNNNNNNNNTND. A coiled-coil region spans residues 631–659; it reads LKRTNQMANDLGRKYEILQSNIKRLEDYL. Residues 766–784 are compositionally biased toward polar residues; it reads NNLDPSNNNESVNLSTSPG. Disordered regions lie at residues 766–911 and 959–988; these read NNLD…NGNN and ENKKHQKQKSLDSTNKQSPGSLGGAGGDVS. The segment covering 785 to 836 has biased composition (low complexity); the sequence is SLVNSNSNPSISNSLNNNNNNNNNNNNNNNGNPNVIITTNNNCNSNSNGNNI. Over residues 847-896 the composition is skewed to basic and acidic residues; the sequence is KEVKEGKEIKEIKEPKEKDKDKEKDKDKEKDKDKEKDKDKEKEKDKDKEN. Residues 875 to 909 adopt a coiled-coil conformation; that stretch reads EKDKDKEKDKDKEKEKDKDKENNNNNNSNNNNNNG. Over residues 897–911 the composition is skewed to low complexity; sequence NNNNNSNNNNNNGNN. Over residues 969–978 the composition is skewed to polar residues; that stretch reads LDSTNKQSPG. The Rho-GAP domain occupies 1004–1186; the sequence is VRLDDLMTRE…LSFPKFNLSV (183 aa).

It belongs to the protein kinase superfamily. STE Ser/Thr protein kinase family.

The sequence is that of Probable inactive serine/threonine-protein kinase DDB_G0293184 from Dictyostelium discoideum (Social amoeba).